The sequence spans 119 residues: UPF0102 protein Athe_0977 (119 aa).

Belongs to the UPF0102 family.

This chain is UPF0102 protein Athe_0977, found in Caldicellulosiruptor bescii (strain ATCC BAA-1888 / DSM 6725 / KCTC 15123 / Z-1320) (Anaerocellum thermophilum).